The following is a 611-amino-acid chain: tRNA uridine 5-carboxymethylaminomethyl modification enzyme MnmG (611 aa).

12 to 17 (GGGHSG) is a binding site for FAD. An NAD(+)-binding site is contributed by 271–285 (GPRYCPSIEEKVYRF).

This sequence belongs to the MnmG family. Homodimer. Heterotetramer of two MnmE and two MnmG subunits. FAD serves as cofactor.

The protein localises to the cytoplasm. NAD-binding protein involved in the addition of a carboxymethylaminomethyl (cmnm) group at the wobble position (U34) of certain tRNAs, forming tRNA-cmnm(5)s(2)U34. This Karelsulcia muelleri (strain GWSS) (Sulcia muelleri) protein is tRNA uridine 5-carboxymethylaminomethyl modification enzyme MnmG.